The following is a 42-amino-acid chain: Crotamine-IV-2 (42 aa).

3 cysteine pairs are disulfide-bonded: Cys-4–Cys-37, Cys-11–Cys-31, and Cys-19–Cys-38.

The protein belongs to the crotamine-myotoxin family. As to quaternary structure, monomer. Expressed by the venom gland.

The protein resides in the secreted. Functionally, cationic peptide that possesses multiple functions. It acts as a cell-penetrating peptide (CPP), and as a potent voltage-gated potassium channel (Kv) inhibitor. It exhibits antimicrobial activities, and hind limb paralysis. It also induces potent blockade of neuromuscular transmission in young chicken biventer cervicis preparation and potent myotoxic effect. In vivo, induces myonecrosis, upon intramuscular or subcutaneous injections into mice. In Crotalus durissus cumanensis (South American rattlesnake), this protein is Crotamine-IV-2.